The chain runs to 35 residues: Small toxic polypeptide LdrD (35 aa).

The chain crosses the membrane as a helical span at residues F10–N32.

This sequence belongs to the Ldr toxic peptide family.

Its subcellular location is the cell inner membrane. Toxic component of a type I toxin-antitoxin (TA) system. Overexpression causes rapid cell killing and nucleoid condensation of the host cell. Overexpression induces stress-response and a number of membrane protein genes. May inhibit ATP synthesis due to its insertion in the cell inner membrane. In Escherichia coli (strain K12), this protein is Small toxic polypeptide LdrD (ldrD).